Reading from the N-terminus, the 120-residue chain is UPF0231 protein KPK_4613 (120 aa).

Belongs to the UPF0231 family.

The sequence is that of UPF0231 protein KPK_4613 from Klebsiella pneumoniae (strain 342).